The sequence spans 184 residues: ADP-ribosylation factor-like protein 2 (184 aa).

G2 carries the N-myristoyl glycine lipid modification. 23 to 30 contributes to the GTP binding site; the sequence is GLDNAGKT. S45 carries the post-translational modification Phosphoserine. GTP contacts are provided by residues 66 to 70 and G68; that span reads DVGGQ. Residue K71 forms a Glycyl lysine isopeptide (Lys-Gly) (interchain with G-Cter in ubiquitin) linkage. 125 to 128 serves as a coordination point for GTP; that stretch reads NKQD.

This sequence belongs to the small GTPase superfamily. Arf family. As to quaternary structure, interacts with ELMOD2. Interacts with ARL2BP; the GTP-bound form interacts with ARL2BP. The GDP-bound form interacts preferentially with TBCD. Interacts with UNC119. Found in a complex with ARL2, ARL2BP and SLC25A4. The GTP-bound form interacts with PDE6D. Found in a complex with ARL2, ARL2BP and SLC25A6. Found in a complex with at least ARL2, PPP2CB, PPP2R1A, PPP2R2A, PPP2R5E and TBCD. In terms of processing, not N-myristoylated. As to expression, expressed in liver and retina (at protein level).

Its subcellular location is the nucleus. It is found in the mitochondrion intermembrane space. It localises to the cytoplasm. The protein localises to the cytoskeleton. The protein resides in the microtubule organizing center. Its subcellular location is the centrosome. It is found in the mitochondrion. Functionally, small GTP-binding protein which cycles between an inactive GDP-bound and an active GTP-bound form, and the rate of cycling is regulated by guanine nucleotide exchange factors (GEF) and GTPase-activating proteins (GAP). GTP-binding protein that does not act as an allosteric activator of the cholera toxin catalytic subunit. Regulates formation of new microtubules and centrosome integrity. Prevents the TBCD-induced microtubule destruction. Participates in association with TBCD, in the disassembly of the apical junction complexes. Antagonizes the effect of TBCD on epithelial cell detachment and tight and adherens junctions disassembly. Together with ARL2, plays a role in the nuclear translocation, retention and transcriptional activity of STAT3. Component of a regulated secretory pathway involved in Ca(2+)-dependent release of acetylcholine. Required for normal progress through the cell cycle. The sequence is that of ADP-ribosylation factor-like protein 2 (ARL2) from Bos taurus (Bovine).